Reading from the N-terminus, the 1235-residue chain is Insulin receptor substrate 1 (1235 aa).

Ser-3 carries the phosphoserine modification. The tract at residues 3–133 (SPPDTDGFSD…AGGGCGGSCS (131 aa)) is mediates interaction with PHIP. The PH domain maps to 12-115 (DVRKVGYLRK…WYQALLQLHN (104 aa)). At Ser-99 the chain carries Phosphoserine; by CK2. The region spanning 155–259 (FKEVWQVILK…EAMRAMSDEF (105 aa)) is the IRS-type PTB domain. The segment at 258 to 425 (EFRPRTKSQS…SDGGFISSDE (168 aa)) is disordered. Phosphoserine; by RPS6KB1 occurs at positions 265 and 302. Positions 265–276 (SQSSSSCSNPIS) are enriched in low complexity. Ser-307 is modified (phosphoserine; by IKKB, MAPK8 and RPS6KB1). Ser-318, Ser-325, Ser-340, and Ser-343 each carry phosphoserine. Basic residues predominate over residues 349–358 (THAHRHRGSS). Composition is skewed to low complexity over residues 378-399 (SPSA…GSTS) and 407-419 (SSAS…SDGG). Ser-414 is modified (phosphoserine). 2 positions are modified to phosphothreonine: Thr-441 and Thr-448. At Tyr-460 the chain carries Phosphotyrosine; by INSR. Positions 460-463 (YICM) match the YXXM motif 1 motif. Residue Thr-502 is modified to Phosphothreonine; by CK2. Residues 520 to 539 (THSAGTSPTISHQKTPSQSS) form a disordered region. Phosphoserine; by RPS6KB1 is present on Ser-522. A compositionally biased stretch (polar residues) spans 522–539 (SAGTSPTISHQKTPSQSS). 2 consecutive short sequence motifs (YXXM motif) follow at residues 546–549 (YTEM) and 608–611 (YMPM). Tyr-608 is subject to Phosphotyrosine; by INSR. Ser-612 is subject to Phosphoserine. Residue Tyr-628 is modified to Phosphotyrosine; by INSR. The YXXM motif 4 motif lies at 628–631 (YMPM). Position 632 is a phosphoserine; by RPS6KB1 and ROCK2 (Ser-632). Tyr-658 carries the post-translational modification Phosphotyrosine. The short motif at 658-661 (YMMM) is the YXXM motif 5 element. Residues 669–689 (PDIGGGSCSSSSISAAPSGSS) are compositionally biased toward low complexity. Positions 669–720 (PDIGGGSCSSSSISAAPSGSSYGKPWTNGVGGHHTHALPHAKPPVESGGGKL) are disordered. The short motif at 727–730 (YMNM) is the YXXM motif 6 element. Residues 766-921 (FKHTQRPGEP…ATSRSSPSVR (156 aa)) are disordered. Basic and acidic residues predominate over residues 771 to 780 (RPGEPEEGAR). Composition is skewed to low complexity over residues 785-794 (RLSSSSGRLR), 801-810 (DSSSSTSSDS), and 872-881 (QQQQQQQQQQ). Residue Ser-789 is modified to Phosphoserine; by AMPK and SIK2. At Ser-891 the chain carries Phosphoserine. Phosphotyrosine; by INSR is present on residues Tyr-895, Tyr-939, and Tyr-987. The interval 895 to 897 (YVN) is GRB2-binding. 3 consecutive short sequence motifs (YXXM motif) follow at residues 939–942 (YMNM), 987–990 (YMTM), and 1010–1013 (YADM). A disordered region spans residues 1024–1165 (LPRTTGAAPP…SAPGCGAAGG (142 aa)). Over residues 1025 to 1046 (PRTTGAAPPPSSTASASASVTP) the composition is skewed to low complexity. Residues 1072–1084 (TRVNLSPNHNQSA) show a composition bias toward polar residues. Phosphoserine is present on Ser-1099. Ser-1100 bears the Phosphoserine; by RPS6KB1 mark. Polar residues predominate over residues 1101–1114 (ETFSAPTRAANTVS). Residues 1118 to 1128 (GAAGGGSGGGS) are compositionally biased toward gly residues. A Phosphotyrosine; by INSR modification is found at Tyr-1172. The segment at 1177–1235 (LVKDVKQHPQDCPSQQQSLPPPPPHQPLGSNEGSSPRRSSEDLSTYASINFQKQPEDRQ) is disordered. Residue Lys-1179 forms a Glycyl lysine isopeptide (Lys-Gly) (interchain with G-Cter in ubiquitin) linkage. Residues 1204–1229 (LGSNEGSSPRRSSEDLSTYASINFQK) are compositionally biased toward polar residues. Tyr-1222 carries the post-translational modification Phosphotyrosine; by INSR.

As to quaternary structure, interacts with SOCS7. Interacts (via IRS-type PTB domain) with IGF1R and INSR (via the tyrosine-phosphorylated NPXY motif). Interacts with UBTF, FER and PIK3CA. Interacts (via phosphorylated YXXM motifs) with PIK3R1. Interacts with ROCK1. Interacts (via PH domain) with PHIP. Interacts with GRB2. Interacts with ALK. Interacts with EIF2AK2/PKR. Interacts with GKAP1. Interacts with DGKZ in the absence of insulin; insulin stimulation decreases this interaction. Found in a ternary complex with DGKZ and PIP5K1A in the absence of insulin stimulation. Interacts with SQSTM1; the interaction is disrupted by the presence of tensin TNS2. Interacts with NCK1 (via SH2 domain). Interacts with NCK2 (via SH3 domain). Interacts with SH2B1; this interaction enhances leptin-induced activation of the PI3-kinase pathway. Interacts with DVL2; this interaction promotes the Wnt/beta-catenin signaling pathway. Interacts with JAK1. Serine phosphorylation of IRS1 is a mechanism for insulin resistance. Ser-307 phosphorylation inhibits insulin action through disruption of IRS1 interaction with the insulin receptor, and Ser-789 phosphorylation is increased in the liver of insulin-resistant rats. Phosphorylation of Tyr-895 is required for GRB2-binding. Phosphorylated by ALK. Phosphorylated at Ser-265, Ser-302, Ser-632 and Ser-1100 by RPS6KB1; phosphorylation induces accelerated degradation of IRS1. Phosphorylated on tyrosine residues in response to insulin. In skeletal muscles, dephosphorylated on Tyr-608 by TNS2 under anabolic conditions; dephosphorylation results in the proteasomal degradation of IRS1. Post-translationally, ubiquitinated by the Cul7-RING(FBXW8) complex in a mTOR-dependent manner, leading to its degradation: the Cul7-RING(FBXW8) complex recognizes and binds IRS1 previously phosphorylated by S6 kinase (RPS6KB1 or RPS6KB2). Ubiquitinated by TRAF4 through 'Lys-29' linkage; this ubiquitination regulates the interaction of IRS1 with IGFR and IRS1 tyrosine phosphorylation upon IGF1 stimulation. In terms of processing, S-nitrosylation at by BLVRB inhibits its activity.

The protein localises to the cytoplasm. It localises to the nucleus. Its function is as follows. Signaling adapter protein that participates in the signal transduction from two prominent receptor tyrosine kinases, insulin receptor/INSR and insulin-like growth factor I receptor/IGF1R. Plays therefore an important role in development, growth, glucose homeostasis as well as lipid metabolism. Upon phosphorylation by the insulin receptor, functions as a signaling scaffold that propagates insulin action through binding to SH2 domain-containing proteins including the p85 regulatory subunit of PI3K, NCK1, NCK2, GRB2 or SHP2. Recruitment of GRB2 leads to the activation of the guanine nucleotide exchange factor SOS1 which in turn triggers the Ras/Raf/MEK/MAPK signaling cascade. Activation of the PI3K/AKT pathway is responsible for most of insulin metabolic effects in the cell, and the Ras/Raf/MEK/MAPK is involved in the regulation of gene expression and in cooperation with the PI3K pathway regulates cell growth and differentiation. Acts a positive regulator of the Wnt/beta-catenin signaling pathway through suppression of DVL2 autophagy-mediated degradation leading to cell proliferation. This chain is Insulin receptor substrate 1 (Irs1), found in Rattus norvegicus (Rat).